Here is a 745-residue protein sequence, read N- to C-terminus: Copper-transporting ATPase (745 aa).

An HMA domain is found at 1–67 (MKESFYIEGM…LIEKLGYSPK (67 aa)). Topologically, residues 1-83 (MKESFYIEGM…KKEFFSPNVK (83 aa)) are cytoplasmic. Residues C12 and C15 each contribute to the Cu cation site. Residues 84–104 (LALAVIFTLFVVYLSMGAMLS) form a helical membrane-spanning segment. The Extracellular segment spans residues 105–124 (PSLLPESLLTINHHSNFLNA). A helical transmembrane segment spans residues 125-144 (CLQLIGALIVMHLGRDFYIQ). At 145 to 151 (GFKALWH) the chain is on the cytoplasmic side. The helical transmembrane segment at 152 to 172 (RQPNMSSLIAIGTSAALISSL) threads the bilayer. Residues 173–194 (WQLYLVYTNHYTDQWSYGHYYF) lie on the Extracellular side of the membrane. A helical transmembrane segment spans residues 195–215 (ESVCVILMFVMVGKRIENVSK). The Cytoplasmic segment spans residues 216–343 (DKALDAMQAL…KAEISRLADK (128 aa)). Residues 344-366 (VSSVFVPSVIAIAVLAFVVWLII) traverse the membrane as a helical segment. Residues 367–379 (APKPDFWWNFRTA) lie on the Extracellular side of the membrane. A helical transmembrane segment spans residues 380 to 397 (LEVFVSVLVISCPCALGL). The Cytoplasmic segment spans residues 398–685 (ATPMSILVAN…KLSQATIKNI (288 aa)). The active-site 4-aspartylphosphate intermediate is D435. The Mg(2+) site is built by D631 and D635. A helical membrane pass occupies residues 686–705 (KENLFWAFCYNSVFIPLACG). Over 706-716 (VLYKANIMLSP) the chain is Extracellular. A helical membrane pass occupies residues 717 to 735 (AIAGLAMSLSSVSVVLNSQ). The Cytoplasmic portion of the chain corresponds to 736–745 (RLRNFKIKDH).

Belongs to the cation transport ATPase (P-type) (TC 3.A.3) family. Type IB subfamily.

It localises to the cell membrane. The catalysed reaction is Cu(2+)(in) + ATP + H2O = Cu(2+)(out) + ADP + phosphate + H(+). Its function is as follows. Probably involved in copper export. The protein is Copper-transporting ATPase (copA) of Helicobacter pylori (strain J99 / ATCC 700824) (Campylobacter pylori J99).